We begin with the raw amino-acid sequence, 377 residues long: MDLDGMRPTWAEVDLNAVRANIRALKRISKAPRLMAVVKANGYGHGAVPVATAAIEAGADWLGVASVEEGVTLRRHGISAPILVLGYVSPGQAEAVLTEGLRVALFDGELGQALNREGRRLGRWARVHLKVDTGMGRIGLQPAEVGRLGRELARLDHVEVEGVFTHLATADEPGNPYTRLQLERYEAALAELAAAGVRPAIRHAANSAGLMLHPEAHYDMVRSGIAVVGLPPAPGVAWPVKLAPALTWKTRVGLVKWLEAGHSISYGCTYTTARREQIATLPVGYADGYPRRLSNRAQVLIRGRRCPVVGVVTMDQMMVRVPDDLPVRVGDEVVLIGRQGGEEITATELAGLADTISYEIVCGISRRVPRFYGGETA.

Lys39 acts as the Proton acceptor; specific for D-alanine in catalysis. Lys39 carries the N6-(pyridoxal phosphate)lysine modification. Arg137 lines the substrate pocket. The active-site Proton acceptor; specific for L-alanine is Tyr266. Met314 contacts substrate.

It belongs to the alanine racemase family. Pyridoxal 5'-phosphate serves as cofactor.

It catalyses the reaction L-alanine = D-alanine. Its pathway is amino-acid biosynthesis; D-alanine biosynthesis; D-alanine from L-alanine: step 1/1. In terms of biological role, catalyzes the interconversion of L-alanine and D-alanine. May also act on other amino acids. The polypeptide is Alanine racemase (alr) (Symbiobacterium thermophilum (strain DSM 24528 / JCM 14929 / IAM 14863 / T)).